The following is a 285-amino-acid chain: Protease HtpX homolog (285 aa).

Helical transmembrane passes span 7 to 27 (TAMLMAAITALFIVIGGMIGG) and 30 to 50 (GMTIALLFALGMNFFSYWFSD). H131 contributes to the Zn(2+) binding site. E132 is a catalytic residue. A Zn(2+)-binding site is contributed by H135. Transmembrane regions (helical) follow at residues 146–166 (ITATMAGAISAIANFAMFFGG) and 177–197 (IAGIAVALLAPIAGALIQMAI). Position 202 (E202) interacts with Zn(2+).

This sequence belongs to the peptidase M48B family. Zn(2+) serves as cofactor.

The protein localises to the cell inner membrane. The chain is Protease HtpX homolog from Burkholderia multivorans (strain ATCC 17616 / 249).